Consider the following 515-residue polypeptide: Folate synthesis bifunctional protein, mitochondrial (515 aa).

Residues 1–28 (MSILKCLGVRGNQLCAARNYLKVLGFSS) constitute a mitochondrion transit peptide. An HPPK region spans residues 47-172 (VIALGSNVGD…PFVMAPLMDL (126 aa)). Residues 230 to 498 (TLVMGILNLT…NVKDNLDAVK (269 aa)) enclose the Pterin-binding domain. The DHPS stretch occupies residues 232–515 (VMGILNLTPD…QKSSPIKFKQ (284 aa)). N237 contacts Mg(2+). (7,8-dihydropterin-6-yl)methyl diphosphate contacts are provided by residues T277, D314, N333, D406, K451, and 486–488 (RVH).

It in the N-terminal section; belongs to the HPPK family. The protein in the C-terminal section; belongs to the DHPS family. In terms of assembly, homomultimer. The cofactor is Mg(2+).

The protein localises to the mitochondrion. It carries out the reaction 6-hydroxymethyl-7,8-dihydropterin + ATP = (7,8-dihydropterin-6-yl)methyl diphosphate + AMP + H(+). It catalyses the reaction (7,8-dihydropterin-6-yl)methyl diphosphate + 4-aminobenzoate = 7,8-dihydropteroate + diphosphate. It participates in cofactor biosynthesis; tetrahydrofolate biosynthesis; 2-amino-4-hydroxy-6-hydroxymethyl-7,8-dihydropteridine diphosphate from 7,8-dihydroneopterin triphosphate: step 4/4. Its pathway is cofactor biosynthesis; tetrahydrofolate biosynthesis; 7,8-dihydrofolate from 2-amino-4-hydroxy-6-hydroxymethyl-7,8-dihydropteridine diphosphate and 4-aminobenzoate: step 1/2. In terms of biological role, catalyzes the first two consecutive steps of tetrahydrofolate biosynthesis. This Pisum sativum (Garden pea) protein is Folate synthesis bifunctional protein, mitochondrial.